Here is an 84-residue protein sequence, read N- to C-terminus: CDC42 small effector protein 2 (84 aa).

Residues cysteine 10 and cysteine 11 are each lipidated (S-palmitoyl cysteine). One can recognise a CRIB domain in the interval 29–42 (IGEPTNFVHTAHVG). Phosphoserine is present on residues serine 43 and serine 52.

This sequence belongs to the CDC42SE/SPEC family. Interacts with CDC42 (in GTP-bound form). Interacts weakly with RAC1 and not at all with RHOA.

It is found in the cytoplasm. It localises to the cytoskeleton. The protein localises to the cell membrane. The protein resides in the cell projection. Its subcellular location is the phagocytic cup. In terms of biological role, probably involved in the organization of the actin cytoskeleton by acting downstream of CDC42, inducing actin filament assembly. Alters CDC42-induced cell shape changes. In activated T-cells, may play a role in CDC42-mediated F-actin accumulation at the immunological synapse. May play a role in early contractile events in phagocytosis in macrophages. In Bos taurus (Bovine), this protein is CDC42 small effector protein 2 (CDC42SE2).